The following is a 278-amino-acid chain: tRNA uridine(34) hydroxylase (278 aa).

Residues 122-216 form the Rhodanese domain; the sequence is QDPDVVVIDT…YLETIAPEES (95 aa). The active-site Cysteine persulfide intermediate is Cys176.

Belongs to the TrhO family.

It carries out the reaction uridine(34) in tRNA + AH2 + O2 = 5-hydroxyuridine(34) in tRNA + A + H2O. In terms of biological role, catalyzes oxygen-dependent 5-hydroxyuridine (ho5U) modification at position 34 in tRNAs. The polypeptide is tRNA uridine(34) hydroxylase (Synechocystis sp. (strain ATCC 27184 / PCC 6803 / Kazusa)).